The sequence spans 100 residues: UPF0125 protein CV_3462 (100 aa).

This sequence belongs to the UPF0125 (RnfH) family.

The chain is UPF0125 protein CV_3462 from Chromobacterium violaceum (strain ATCC 12472 / DSM 30191 / JCM 1249 / CCUG 213 / NBRC 12614 / NCIMB 9131 / NCTC 9757 / MK).